A 62-amino-acid chain; its full sequence is Conotoxin TeAr151 (62 aa).

The first 22 residues, 1-22 (MRCLPVFVVLLLLIASAPSVDA), serve as a signal peptide directing secretion. The propeptide occupies 23–47 (QPKTKDDVPLAPLHDNIQNTLQTLR). Position 55 is a methionine sulfoxide; partial (methionine 55). Serine 60 bears the Serine amide mark.

Belongs to the conotoxin T superfamily. Contains 2 disulfide bonds. In terms of processing, contains 2 disulfide bonds that can be either 'C1-C3, C2-C4' or 'C1-C4, C2-C3', since these disulfide connectivities have been observed for conotoxins with cysteine framework V (for examples, see AC P0DQQ7 and AC P81755).. In terms of tissue distribution, expressed by the venom duct. Is mostly present in part 5 of the venom duct (distal part near the pharynx), and less abundantly present in part 4 of the venom duct.

The protein resides in the secreted. This is Conotoxin TeAr151 from Conus textile (Cloth-of-gold cone).